The primary structure comprises 379 residues: MKTLPITRYRFFQKIQPLSLLKKITGKTITGCLQVFSTSGTWSIYVEEGKLIYACYSERMFEPLYRHLGNLSPQIATLPKEINEQLRAIFETGIENQAIPNPDYLAICWLVNQKYISSSQAAVLIEQLALEVVESFLMLEEGSYEFIPESFLDDLPKFCYLNVRLLVEQCQQHGRVPEAFRREASSQEISSSTEHNQIPVNNRRSTKFTSPPHTQPKPEPRLPQINTNKSTEYSKRYASQPNTVNHGYSQTSATSTDKKIYTIFCIDENPIVLNNIKNFLDDQIFAVIGVTDSLKALMEILCTKPDIILINVDMPDLDGYELCSLLRKHSYFKNTPVIMVTEKAGLVDRARAKIVRASGHLTKPFNQGDLLKVIFKHIT.

The interval 181–226 (RREASSQEISSSTEHNQIPVNNRRSTKFTSPPHTQPKPEPRLPQIN) is disordered. Residues 186–212 (SQEISSSTEHNQIPVNNRRSTKFTSPP) show a composition bias toward polar residues. In terms of domain architecture, Response regulatory spans 262-378 (TIFCIDENPI…DLLKVIFKHI (117 aa)). The residue at position 313 (aspartate 313) is a 4-aspartylphosphate.

Its subcellular location is the cell septum. Its function is as follows. Controls heterocyst pattern formation. Required for the differentiation of intercalary heterocysts but not for terminal heterocysts. This chain is Protein PatA (patA), found in Nostoc sp. (strain PCC 7120 / SAG 25.82 / UTEX 2576).